The chain runs to 386 residues: L-olivosyl-oleandolide 3-O-methyltransferase (386 aa).

S-adenosyl-L-methionine contacts are provided by residues S166, 195-201 (EIGIGGY), S210, D227, 245-246 (RQ), and D268. D268 provides a ligand contact to Mg(2+). H271 acts as the Proton acceptor in catalysis. Mg(2+)-binding residues include E296 and D297. Residues 364–386 (RRAINKEGGIPHTVPREPFWNDN) form a disordered region.

This sequence belongs to the methyltransferase OleY/MycE family. In terms of assembly, homodimer. The cofactor is Mg(2+).

The enzyme catalyses L-olivosyl-oleandolide + S-adenosyl-L-methionine = L-oleandrosyl-oleandolide + S-adenosyl-L-homocysteine + H(+). The protein operates within antibiotic biosynthesis. Functionally, 3-O-methyltransferase involved in the synthesis of L-oleandrose, a sugar attached to oleandomycin, a macrolide antibiotic. Acts on monoglycosylated macrolactones and mediates the conversion of L-olivosyl-erythronolide B into its 3-O-methylated derivative, L-oleandrosyl-erythronolide B. Also able to methylate other monoglycosylated derivatives, such as L-rhamnosyl- and L-mycarosyl-erythronolide B. The protein is L-olivosyl-oleandolide 3-O-methyltransferase (oleY) of Streptomyces antibioticus.